The primary structure comprises 55 residues: Small ribosomal subunit protein eS31 (55 aa).

Zn(2+) is bound by residues C27, C30, C45, and C48. The segment at 27–48 adopts a C4-type zinc-finger fold; it reads CSRCGKGFFMAQHKDRRSCGKC.

It belongs to the eukaryotic ribosomal protein eS31 family. As to quaternary structure, part of the 30S ribosomal subunit. The cofactor is Zn(2+).

In Cenarchaeum symbiosum (strain A), this protein is Small ribosomal subunit protein eS31.